Reading from the N-terminus, the 341-residue chain is tRNA N6-adenosine threonylcarbamoyltransferase (341 aa).

Fe cation is bound by residues His111 and His115. Residues 133–137, Asp166, Gly179, Asp183, and Asn273 each bind substrate; that span reads AVSGG. Fe cation is bound at residue Asp301.

The protein belongs to the KAE1 / TsaD family. The cofactor is Fe(2+).

The protein resides in the cytoplasm. The catalysed reaction is L-threonylcarbamoyladenylate + adenosine(37) in tRNA = N(6)-L-threonylcarbamoyladenosine(37) in tRNA + AMP + H(+). Functionally, required for the formation of a threonylcarbamoyl group on adenosine at position 37 (t(6)A37) in tRNAs that read codons beginning with adenine. Is involved in the transfer of the threonylcarbamoyl moiety of threonylcarbamoyl-AMP (TC-AMP) to the N6 group of A37, together with TsaE and TsaB. TsaD likely plays a direct catalytic role in this reaction. This chain is tRNA N6-adenosine threonylcarbamoyltransferase, found in Geotalea daltonii (strain DSM 22248 / JCM 15807 / FRC-32) (Geobacter daltonii).